A 277-amino-acid polypeptide reads, in one-letter code: Methyltransferase adrK (277 aa).

Residues 123-124 (DL), 150-151 (DV), and 151-152 (VL) each bind S-adenosyl-L-methionine.

Belongs to the class I-like SAM-binding methyltransferase superfamily. As to quaternary structure, homodimer.

It participates in secondary metabolite biosynthesis; terpenoid biosynthesis. Functionally, methyltransferase; part of the gene cluster that mediates the biosynthesis of andrastins, meroterpenoid compounds that exhibit inhibitory activity against ras farnesyltransferase, suggesting that they could be promising leads for antitumor agents. The first step of the pathway is the synthesis of 3,5-dimethylorsellinic acid (DMOA) by the polyketide synthase adrD via condensation of one acetyl-CoA starter unit with 3 malonyl-CoA units and 2 methylations. DMAO is then converted to farnesyl-DMAO by the prenyltransferase adrG. The methyltransferase adrK catalyzes the methylation of the carboxyl group of farnesyl-DMAO to farnesyl-DMAO methyl ester which is further converted to epoxyfarnesyl-DMAO methyl ester by the FAD-dependent monooxygenase adrH. The terpene cyclase adrI then catalyzes the carbon skeletal rearrangement to generate the andrastin E, the first compound in the pathway having the andrastin scaffold, with the tetracyclic ring system. The post-cyclization tailoring enzymes adrF, adrE, adrJ, and adrA, are involved in the conversion of andrastin E into andrastin A. The short chain dehydrogenase adrF is responsible for the oxidation of the C-3 a hydroxyl group of andrastin E to yield the corresponding ketone, andrastin D. The ketoreductase adrE stereoselectively reduces the carbonyl moiety to reverse the stereochemistry of the C-3 position to yield andrastin F. The acetyltransferase adrJ is the acetyltransferase that attaches the acetyl group to the C-3 hydroxyl group of andrastin F to yield andrastin C. Finally, the cytochrome P450 monooxygenase adrA catalyzes two sequential oxidation reactions of the C-23 methyl group, to generate the corresponding alcohol andrastin B, and aldehyde andrastin A. This is Methyltransferase adrK from Penicillium rubens (strain ATCC 28089 / DSM 1075 / NRRL 1951 / Wisconsin 54-1255) (Penicillium chrysogenum).